The sequence spans 384 residues: Protein NDRG1 (384 aa).

An N-acetylserine modification is found at S2. Phosphoserine occurs at positions 2, 319, and 326. The disordered stretch occupies residues 325–384 (RSRTASGSSVTSLEGARSRSHTSEGTRSRSHTSEGTRLDIIPNSGGPGSSAGPNSTEVSC). Residues 327–336 (RTASGSSVTS) are compositionally biased toward polar residues. T328 is subject to Phosphothreonine; by SGK1. Phosphoserine; by SGK1 is present on residues S330 and S332. Residue S333 is modified to Phosphoserine. Phosphothreonine is present on T335. Residues S336 and S342 each carry the phosphoserine modification. A run of 2 repeats spans residues 339 to 348 (GARSRSHTSE) and 349 to 358 (GTRSRSHTSE). The tract at residues 339–358 (GARSRSHTSEGTRSRSHTSE) is 2 X 10 AA tandem repeats of G-[PST]-R-S-R-S-H-T-S-E. The segment covering 345–361 (HTSEGTRSRSHTSEGTR) has biased composition (basic and acidic residues). The residue at position 346 (T346) is a Phosphothreonine; by SGK1. A Phosphoserine modification is found at S352. At T356 the chain carries Phosphothreonine; by SGK1. Low complexity predominate over residues 374–384 (SAGPNSTEVSC).

This sequence belongs to the NDRG family. Interacts with RAB4A (membrane-bound form); the interaction involves NDRG1 in vesicular recycling of CDH1. Interacts with APOA1, APOA2, PRA1 and RTN1. Post-translationally, under stress conditions, phosphorylated in the C-terminal on many serine and threonine residues. Phosphorylated in vitro by PKA. Phosphorylation enhanced by increased intracellular cAMP levels. Homocysteine induces dephosphorylation. Phosphorylation by SGK1 is cell cycle dependent.

The protein resides in the cytoplasm. Its subcellular location is the cytosol. The protein localises to the cytoskeleton. It is found in the microtubule organizing center. It localises to the centrosome. The protein resides in the nucleus. Its subcellular location is the cell membrane. Functionally, stress-responsive protein involved in hormone responses, cell growth, and differentiation. Acts as a tumor suppressor in many cell types. Necessary but not sufficient for p53/TP53-mediated caspase activation and apoptosis. Has a role in cell trafficking notably of the Schwann cell and is necessary for the maintenance and development of the peripheral nerve myelin sheath. Required for vesicular recycling of CDH1 and TF. May also function in lipid trafficking. Protects cells from spindle disruption damage. Functions in p53/TP53-dependent mitotic spindle checkpoint. Regulates microtubule dynamics and maintains euploidy. The protein is Protein NDRG1 (NDRG1) of Bos taurus (Bovine).